The primary structure comprises 230 residues: Urease accessory protein UreE (230 aa).

The interval 197-230 is disordered; that stretch reads LHIHAIHSHGDGDSHNHDHDHSHSHGDHDHDHKH. The span at 204–230 shows a compositional bias: basic and acidic residues; sequence SHGDGDSHNHDHDHSHSHGDHDHDHKH.

This sequence belongs to the UreE family.

The protein localises to the cytoplasm. In terms of biological role, involved in urease metallocenter assembly. Binds nickel. Probably functions as a nickel donor during metallocenter assembly. The sequence is that of Urease accessory protein UreE from Yersinia aldovae.